A 55-amino-acid polypeptide reads, in one-letter code: Large ribosomal subunit protein bL33 (55 aa).

Basic and acidic residues predominate over residues 1–11 (MAKGGREKIKL). Positions 1 to 26 (MAKGGREKIKLESTAGTGHFYTTDKN) are disordered.

It belongs to the bacterial ribosomal protein bL33 family.

This Methylibium petroleiphilum (strain ATCC BAA-1232 / LMG 22953 / PM1) protein is Large ribosomal subunit protein bL33.